The primary structure comprises 1029 residues: MAQPQRPYDALYDPNFTVAGPRDHYRQQTMAGGFNIERAPVYNNFFSELPHHPPSTLRLKNADRVPAFVDRNYRPAANDPNDTRQRSDALAVSGPNRPKYFRRPMLAAAEIHIKQAPPSQLPPLPSHQDLNATAPAAMGGAGGLGEPRSKTIGTQSDYRENEAQTAPWEPGYVLPAPGALTAKQAALMRRYHTDVPEVLQLKDLAFPDGLPAGLQEVTRIDKMRAKRAFEASLPPIDDVARLPLRQRMIEEWEAKEWEEREQEILSIQDKRLELLDNALQVREEELDDENRLRVEARKEAMLAGRAGKFADVQATRIKTMRQLIENRKYVEKHRKLHKPTIVERYANYGSGTYAPLQREGRFPESKPLGKEIETEGYAPVTLKGVVDLESFLPSRLLNPRVAAPQKPARLDYHQRKEAAVQRDLKAINDLLDTAKGTAGRGFGDCWPAPLQDDGGAGMGNGTLGRATSTVGKGTLGAGGSAGGAAPGGASMALLGGPSTAAASAMGPLASGVSGSPSRRVVRAIERPPTPELPQPPAVTAPQHAAVVLLQRLLRGRAAQNIMYEGRVRRQELIDELRLEEVVSADGTKIDGQPIRRPEHRDTATLRIDALVGSAVAEVAAILAETDPERRETLLAGLDVSRAHATAAAVAAAAADINASARAEAEEAAATAMAEAAAAAAAAAAAAAAAEDGGAEGAAESAAEAAAAAEAAASAAEEAYAGAVAAAAAPARAAALNLEALGISPEEAEEAAVRIQAAFKGHKARKEVAAMRARGEMLRNIMANGDEAKVVTCQAAIRGHLARKRVRQLRASQAGNEGFAGAPSASPEPAAPLPALAENQDQQEPQPQPQPSSSSGALDLADYDDHHGEASAAMLGGEPSLAVGGSREGEQQLEADAEAEAEAEAEAEAGAEAEASAQAGAEAEAEAGVEAEAEASAGAEASVGAGAEGDAEAETEAGAQAEPGPEAEAEAEAGAEAEAENGAEAEARLGGEEEGFREGEGQGGAAAGEAGPGGELAEGEGEAGEGEAAE.

Disordered stretches follow at residues 72-97 and 117-170; these read NYRP…GPNR and PPSQ…PWEP. Positions 272-299 form a coiled coil; sequence LELLDNALQVREEELDDENRLRVEARKE. The span at 837–854 shows a compositional bias: low complexity; the sequence is ENQDQQEPQPQPQPSSSS. 2 disordered regions span residues 837–861 and 876–1029; these read ENQD…DLAD and GEPS…EAAE. Positions 890 to 910 are enriched in acidic residues; it reads QQLEADAEAEAEAEAEAEAGA. Low complexity predominate over residues 911–921; the sequence is EAEASAQAGAE. A compositionally biased stretch (acidic residues) spans 922–932; sequence AEAEAGVEAEA. A compositionally biased stretch (low complexity) spans 933-944; it reads EASAGAEASVGA. Residues 964–982 show a composition bias toward acidic residues; it reads PEAEAEAEAGAEAEAENGA. The segment covering 984-999 has biased composition (basic and acidic residues); the sequence is AEARLGGEEEGFREGE. The segment covering 1000–1015 has biased composition (gly residues); sequence GQGGAAAGEAGPGGEL. Residues 1016–1029 are compositionally biased toward acidic residues; the sequence is AEGEGEAGEGEAAE.

The protein belongs to the CFAP91 family. As to quaternary structure, identified in a spoke-associated complex containing CFAP61, CFAP91 and CFAP251; the complex is associated with the radial spokes of the axoneme. The complex associates with Calmodulin; the association is calcium sensitive. Interacts with RSP3.

The protein resides in the cytoplasm. It is found in the cytoskeleton. It localises to the flagellum axoneme. As component of a spoke-associated complex, regulates flagellar dynein activity by mediating regulatory signals between the radial spokes and dynein arms. In Chlamydomonas reinhardtii (Chlamydomonas smithii), this protein is Cilia- and flagella-associated protein 91.